Here is a 417-residue protein sequence, read N- to C-terminus: N-acetylmuramoyl-L-alanine amidase AmiC (417 aa).

The segment at residues 1–31 (MSGSNTAISRRRLLQGAGAMWLLSVSQVSLA) is a signal peptide (tat-type signal). The tract at residues 166-185 (LEKQVPPAQSGPQPGKAGRD) is disordered. One can recognise a MurNAc-LAA domain in the interval 190–404 (IMLDPGHGGE…VAESILAGIK (215 aa)).

This sequence belongs to the N-acetylmuramoyl-L-alanine amidase 3 family. Post-translationally, predicted to be exported by the Tat system. The position of the signal peptide cleavage has not been experimentally proven.

Its subcellular location is the periplasm. The enzyme catalyses Hydrolyzes the link between N-acetylmuramoyl residues and L-amino acid residues in certain cell-wall glycopeptides.. Its function is as follows. Cell-wall hydrolase involved in septum cleavage during cell division. The sequence is that of N-acetylmuramoyl-L-alanine amidase AmiC (amiC) from Escherichia coli O6:H1 (strain CFT073 / ATCC 700928 / UPEC).